We begin with the raw amino-acid sequence, 475 residues long: L-seryl-tRNA(Sec) selenium transferase (475 aa).

Lysine 295 bears the N6-(pyridoxal phosphate)lysine mark.

The protein belongs to the SelA family. Requires pyridoxal 5'-phosphate as cofactor.

It is found in the cytoplasm. It catalyses the reaction L-seryl-tRNA(Sec) + selenophosphate + H(+) = L-selenocysteinyl-tRNA(Sec) + phosphate. It participates in aminoacyl-tRNA biosynthesis; selenocysteinyl-tRNA(Sec) biosynthesis; selenocysteinyl-tRNA(Sec) from L-seryl-tRNA(Sec) (bacterial route): step 1/1. Functionally, converts seryl-tRNA(Sec) to selenocysteinyl-tRNA(Sec) required for selenoprotein biosynthesis. This is L-seryl-tRNA(Sec) selenium transferase from Desulfovibrio desulfuricans (strain ATCC 27774 / DSM 6949 / MB).